A 344-amino-acid chain; its full sequence is uncharacterized protein (344 aa).

5 consecutive transmembrane segments (helical) span residues 53–73, 84–104, 153–173, 189–209, and 275–295; these read FVVG…VSVW, WPIL…GYNI, IYPL…LYLL, FGAW…LEML, and IASE…VGVF.

The protein belongs to the steroid 5-alpha reductase family.

The protein localises to the endoplasmic reticulum membrane. This is an uncharacterized protein from Schizosaccharomyces pombe (strain 972 / ATCC 24843) (Fission yeast).